The sequence spans 744 residues: Polyadenylate-binding protein, cytoplasmic and nuclear (744 aa).

Positions 1-11 (MSEVANSTSPV) are enriched in polar residues. Residues 1 to 42 (MSEVANSTSPVQDGADANGAQINTNVPAASGDAPTPTTAAQQ) form a disordered region. Positions 33 to 42 (APTPTTAAQQ) are enriched in low complexity. RRM domains are found at residues 48–126 (ASLY…WSQR), 136–213 (GNVF…HHIP), 229–306 (TNIY…RAQK), and 332–462 (VNLY…LAQR). 4 disordered regions span residues 368-411 (EEKK…AGDK), 527-550 (GRGA…NAQQ), 607-651 (IAGG…PGVD), and 723-744 (VKNK…EEKA). A compositionally biased stretch (basic and acidic residues) spans 376 to 397 (KEVKEEKKEDEKKEDEEAKEGS). Gly residues-rich tracts occupy residues 527–545 (GRGA…GRGG), 609–632 (GGPG…GGRG), and 640–649 (PQGGRPGGPG). A PABC domain is found at 647–724 (GPGVDMSVLS…AMSVYDEYVK (78 aa)).

This sequence belongs to the polyadenylate-binding protein type-1 family.

The protein localises to the cytoplasm. It localises to the nucleus. Functionally, binds the poly(A) tail of mRNA. Appears to be an important mediator of the multiple roles of the poly(A) tail in mRNA biogenesis, stability and translation. In the nucleus, involved in both mRNA cleavage and polyadenylation. Is also required for efficient mRNA export to the cytoplasm. Acts in concert with a poly(A)-specific nuclease (PAN) to affect poly(A) tail shortening, which may occur concomitantly with either nucleocytoplasmic mRNA transport or translational initiation. In the cytoplasm, stimulates translation initiation and regulates mRNA decay through translation termination-coupled poly(A) shortening, probably mediated by PAN. The polypeptide is Polyadenylate-binding protein, cytoplasmic and nuclear (PAB1) (Phaeosphaeria nodorum (strain SN15 / ATCC MYA-4574 / FGSC 10173) (Glume blotch fungus)).